A 139-amino-acid chain; its full sequence is Transcription antitermination protein NusB (139 aa).

Belongs to the NusB family.

Involved in transcription antitermination. Required for transcription of ribosomal RNA (rRNA) genes. Binds specifically to the boxA antiterminator sequence of the ribosomal RNA (rrn) operons. The polypeptide is Transcription antitermination protein NusB (Escherichia fergusonii (strain ATCC 35469 / DSM 13698 / CCUG 18766 / IAM 14443 / JCM 21226 / LMG 7866 / NBRC 102419 / NCTC 12128 / CDC 0568-73)).